Consider the following 558-residue polypeptide: Acid-sensing ion channel 4-B (558 aa).

The Cytoplasmic portion of the chain corresponds to Met1–Thr71. A helical membrane pass occupies residues Leu72–Ala92. The Extracellular portion of the chain corresponds to Ala93–Asp433. Cystine bridges form between Cys120–Cys204 and Cys182–Cys189. 5 N-linked (GlcNAc...) asparagine glycosylation sites follow: Asn140, Asn183, Asn188, Asn210, and Asn245. Intrachain disulfides connect Cys298–Cys373, Cys317–Cys369, Cys321–Cys367, Cys330–Cys351, and Cys332–Cys344. Asn374 carries N-linked (GlcNAc...) asparagine glycosylation. The chain crosses the membrane as a helical span at residues Ile434–Leu454. The GAS motif; ion selectivity filter motif lies at Gly450–Ser452. Topologically, residues Thr455–Cys558 are cytoplasmic.

The protein belongs to the amiloride-sensitive sodium channel (TC 1.A.6) family. ASIC4 subfamily. As to quaternary structure, homotrimer. Heterotrimer; with other ASIC proteins producing functional channels. Expressed in central nervous system.

Its subcellular location is the cell membrane. The enzyme catalyses Na(+)(in) = Na(+)(out). Its function is as follows. Does not exhibit measurable stand-alone pH-gated sodium channel activity but may form pH-gated heterotrimeric sodium channels. This is Acid-sensing ion channel 4-B from Danio rerio (Zebrafish).